Reading from the N-terminus, the 146-residue chain is Large ribosomal subunit protein uL15 (146 aa).

The segment at 1–64 (MQLNTIKPAI…MPMHRRLPKR (64 aa)) is disordered. Basic residues predominate over residues 30 to 39 (TATKGHKGQK).

It belongs to the universal ribosomal protein uL15 family. Part of the 50S ribosomal subunit.

In terms of biological role, binds to the 23S rRNA. The protein is Large ribosomal subunit protein uL15 of Geobacter sp. (strain M21).